The sequence spans 283 residues: Formamidopyrimidine-DNA glycosylase (283 aa).

Pro-2 serves as the catalytic Schiff-base intermediate with DNA. The active-site Proton donor is Glu-3. Lys-58 acts as the Proton donor; for beta-elimination activity in catalysis. DNA is bound by residues His-100, Arg-119, and Arg-162. The FPG-type zinc-finger motif lies at 247 to 283; that stretch reads RVYGREGLPCVTPGCSGTVGRIVQSGRSSFHCPLCQR. The active-site Proton donor; for delta-elimination activity is Arg-273.

It belongs to the FPG family. Monomer. Zn(2+) serves as cofactor.

It catalyses the reaction Hydrolysis of DNA containing ring-opened 7-methylguanine residues, releasing 2,6-diamino-4-hydroxy-5-(N-methyl)formamidopyrimidine.. It carries out the reaction 2'-deoxyribonucleotide-(2'-deoxyribose 5'-phosphate)-2'-deoxyribonucleotide-DNA = a 3'-end 2'-deoxyribonucleotide-(2,3-dehydro-2,3-deoxyribose 5'-phosphate)-DNA + a 5'-end 5'-phospho-2'-deoxyribonucleoside-DNA + H(+). In terms of biological role, involved in base excision repair of DNA damaged by oxidation or by mutagenic agents. Acts as a DNA glycosylase that recognizes and removes damaged bases. Has a preference for oxidized purines, such as 7,8-dihydro-8-oxoguanine (8-oxoG). Has AP (apurinic/apyrimidinic) lyase activity and introduces nicks in the DNA strand. Cleaves the DNA backbone by beta-delta elimination to generate a single-strand break at the site of the removed base with both 3'- and 5'-phosphates. The sequence is that of Formamidopyrimidine-DNA glycosylase from Cereibacter sphaeroides (strain KD131 / KCTC 12085) (Rhodobacter sphaeroides).